Consider the following 498-residue polypeptide: ATP synthase subunit beta, chloroplastic (498 aa).

ATP is bound at residue 172 to 179; sequence GGAGVGKT.

The protein belongs to the ATPase alpha/beta chains family. F-type ATPases have 2 components, CF(1) - the catalytic core - and CF(0) - the membrane proton channel. CF(1) has five subunits: alpha(3), beta(3), gamma(1), delta(1), epsilon(1). CF(0) has four main subunits: a(1), b(1), b'(1) and c(9-12).

The protein localises to the plastid. It localises to the chloroplast thylakoid membrane. It carries out the reaction ATP + H2O + 4 H(+)(in) = ADP + phosphate + 5 H(+)(out). In terms of biological role, produces ATP from ADP in the presence of a proton gradient across the membrane. The catalytic sites are hosted primarily by the beta subunits. In Whiteheadia bifolia (Elephants ears), this protein is ATP synthase subunit beta, chloroplastic.